The following is a 336-amino-acid chain: Dihydroorotate dehydrogenase (quinone) (336 aa).

FMN contacts are provided by residues 62-66 (AGLDK) and threonine 86. Lysine 66 serves as a coordination point for substrate. Substrate is bound at residue 111–115 (NRMGF). FMN-binding residues include asparagine 139 and asparagine 172. Asparagine 172 is a binding site for substrate. Serine 175 acts as the Nucleophile in catalysis. Residue asparagine 177 coordinates substrate. Residues lysine 217 and threonine 245 each contribute to the FMN site. 246–247 (NT) is a binding site for substrate. FMN-binding positions include glycine 268, glycine 297, and 318–319 (YS).

It belongs to the dihydroorotate dehydrogenase family. Type 2 subfamily. Monomer. The cofactor is FMN.

Its subcellular location is the cell membrane. It carries out the reaction (S)-dihydroorotate + a quinone = orotate + a quinol. Its pathway is pyrimidine metabolism; UMP biosynthesis via de novo pathway; orotate from (S)-dihydroorotate (quinone route): step 1/1. Its function is as follows. Catalyzes the conversion of dihydroorotate to orotate with quinone as electron acceptor. The protein is Dihydroorotate dehydrogenase (quinone) of Psychromonas ingrahamii (strain DSM 17664 / CCUG 51855 / 37).